Reading from the N-terminus, the 583-residue chain is Arginine--tRNA ligase (583 aa).

The 'HIGH' region motif lies at 121 to 131; that stretch reads ANPTGPLHLGH.

It belongs to the class-I aminoacyl-tRNA synthetase family. Monomer.

Its subcellular location is the cytoplasm. The enzyme catalyses tRNA(Arg) + L-arginine + ATP = L-arginyl-tRNA(Arg) + AMP + diphosphate. In Aquifex aeolicus (strain VF5), this protein is Arginine--tRNA ligase (argS).